The primary structure comprises 195 residues: dTTP/UTP pyrophosphatase (195 aa).

The active-site Proton acceptor is D70.

The protein belongs to the Maf family. YhdE subfamily. A divalent metal cation serves as cofactor.

The protein localises to the cytoplasm. It catalyses the reaction dTTP + H2O = dTMP + diphosphate + H(+). It carries out the reaction UTP + H2O = UMP + diphosphate + H(+). Nucleoside triphosphate pyrophosphatase that hydrolyzes dTTP and UTP. May have a dual role in cell division arrest and in preventing the incorporation of modified nucleotides into cellular nucleic acids. In Photorhabdus laumondii subsp. laumondii (strain DSM 15139 / CIP 105565 / TT01) (Photorhabdus luminescens subsp. laumondii), this protein is dTTP/UTP pyrophosphatase.